A 415-amino-acid polypeptide reads, in one-letter code: Mannosylglycerate hydrolase (415 aa).

Substrate contacts are provided by residues Tyr23, 27-30, Tyr76, Gln98, and Gly158; that span reads WLWD. Catalysis depends on Asp160, which acts as the Proton donor. Substrate-binding positions include Arg193 and 344-345; that span reads YW. Glu388 serves as the catalytic Proton acceptor.

The protein belongs to the glycosyl hydrolase 63 family. As to quaternary structure, homotetramer in solution.

It catalyses the reaction (2R)-2-O-(alpha-D-mannosyl)-glycerate + H2O = D-mannose + (R)-glycerate. The enzyme catalyses (2R)-2-O-(alpha-D-glucopyranosyl)-glycerate + H2O = (R)-glycerate + D-glucose. Its activity is regulated as follows. Activity is not stimulated by divalent cations and not affected in the presence of EDTA. Hydrolase that catalyzes the hydrolysis of mannosylglycerate (MG), a solute produced in response to osmotic stress in thermophiles, into mannose and glycerate. Can also hydrolyze glucosylglycerate (GG) to glucose and glycerate, with similar catalytic efficiency. Is highly specific for MG and GG, and cannot use mannosylglyceramide (MGA), glucosylglycerol, mannosylglucosylglycerate (MGG), glucosylglucosylglycerate (GGG) or trehalose as substrates. The protein is Mannosylglycerate hydrolase of Thermus thermophilus (strain ATCC BAA-163 / DSM 7039 / HB27).